Reading from the N-terminus, the 213-residue chain is Transmembrane protein 186 (213 aa).

Residues 1–79 (MAALLRAVRR…FLSRLKLAQT (79 aa)) are Mitochondrial matrix-facing. Residues 80–100 (ALTVVALPPGYYLYSQGLLTL) traverse the membrane as a helical segment. The Mitochondrial intermembrane portion of the chain corresponds to 101–102 (NT). Residues 103–123 (VCLMSGISGFALTMLCWMSYF) form a helical membrane-spanning segment. The Mitochondrial matrix segment spans residues 124-213 (LRRLVGILYL…QVFGVHQMLK (90 aa)).

Belongs to the TMEM186 family. In terms of assembly, part of the mitochondrial complex I assembly/MCIA complex that comprises at least the core subunits TMEM126B, NDUFAF1, ECSIT and ACAD9 and complement subunits such as COA1 and TMEM186. Interacts with MT-ND3.

The protein resides in the mitochondrion inner membrane. Its function is as follows. As part of the MCIA complex, required for efficient assembly of the mitochondrial complex I. The polypeptide is Transmembrane protein 186 (Homo sapiens (Human)).